A 286-amino-acid chain; its full sequence is Pantothenate synthetase (286 aa).

30–37 (MGNLHSGH) serves as a coordination point for ATP. Residue H37 is the Proton donor of the active site. Q61 lines the (R)-pantoate pocket. Q61 lines the beta-alanine pocket. An ATP-binding site is contributed by 149–152 (GQKD). (R)-pantoate is bound at residue Q155. ATP-binding positions include V178 and 186 to 189 (LSSR).

This sequence belongs to the pantothenate synthetase family. In terms of assembly, homodimer.

It is found in the cytoplasm. The enzyme catalyses (R)-pantoate + beta-alanine + ATP = (R)-pantothenate + AMP + diphosphate + H(+). It participates in cofactor biosynthesis; (R)-pantothenate biosynthesis; (R)-pantothenate from (R)-pantoate and beta-alanine: step 1/1. In terms of biological role, catalyzes the condensation of pantoate with beta-alanine in an ATP-dependent reaction via a pantoyl-adenylate intermediate. The chain is Pantothenate synthetase from Pseudomonas fluorescens (strain ATCC BAA-477 / NRRL B-23932 / Pf-5).